A 320-amino-acid chain; its full sequence is Phospho-N-acetylmuramoyl-pentapeptide-transferase (320 aa).

10 consecutive transmembrane segments (helical) span residues F6–G26, M54–L74, L81–I101, L117–S137, I145–F165, I175–F195, I200–N220, I226–L246, F251–V271, and R300–F320.

It belongs to the glycosyltransferase 4 family. MraY subfamily. Requires Mg(2+) as cofactor.

It is found in the cell membrane. It catalyses the reaction UDP-N-acetyl-alpha-D-muramoyl-L-alanyl-gamma-D-glutamyl-L-lysyl-D-alanyl-D-alanine + di-trans,octa-cis-undecaprenyl phosphate = Mur2Ac(oyl-L-Ala-gamma-D-Glu-L-Lys-D-Ala-D-Ala)-di-trans,octa-cis-undecaprenyl diphosphate + UMP. The protein operates within cell wall biogenesis; peptidoglycan biosynthesis. Functionally, catalyzes the initial step of the lipid cycle reactions in the biosynthesis of the cell wall peptidoglycan: transfers peptidoglycan precursor phospho-MurNAc-pentapeptide from UDP-MurNAc-pentapeptide onto the lipid carrier undecaprenyl phosphate, yielding undecaprenyl-pyrophosphoryl-MurNAc-pentapeptide, known as lipid I. The polypeptide is Phospho-N-acetylmuramoyl-pentapeptide-transferase (Latilactobacillus sakei subsp. sakei (strain 23K) (Lactobacillus sakei subsp. sakei)).